We begin with the raw amino-acid sequence, 293 residues long: Pyridoxal 5'-phosphate synthase subunit PdxS (293 aa).

Asp-23 is a D-ribose 5-phosphate binding site. The active-site Schiff-base intermediate with D-ribose 5-phosphate is the Lys-80. A D-ribose 5-phosphate-binding site is contributed by Gly-152. Position 164 (Arg-164) interacts with D-glyceraldehyde 3-phosphate. D-ribose 5-phosphate is bound by residues Gly-213 and Gly-234 to Ser-235.

Belongs to the PdxS/SNZ family. In terms of assembly, in the presence of PdxT, forms a dodecamer of heterodimers.

It carries out the reaction aldehydo-D-ribose 5-phosphate + D-glyceraldehyde 3-phosphate + L-glutamine = pyridoxal 5'-phosphate + L-glutamate + phosphate + 3 H2O + H(+). It functions in the pathway cofactor biosynthesis; pyridoxal 5'-phosphate biosynthesis. Its function is as follows. Catalyzes the formation of pyridoxal 5'-phosphate from ribose 5-phosphate (RBP), glyceraldehyde 3-phosphate (G3P) and ammonia. The ammonia is provided by the PdxT subunit. Can also use ribulose 5-phosphate and dihydroxyacetone phosphate as substrates, resulting from enzyme-catalyzed isomerization of RBP and G3P, respectively. The sequence is that of Pyridoxal 5'-phosphate synthase subunit PdxS from Desulfovibrio desulfuricans (strain ATCC 27774 / DSM 6949 / MB).